Here is a 251-residue protein sequence, read N- to C-terminus: Ditrans,polycis-undecaprenyl-diphosphate synthase ((2E,6E)-farnesyl-diphosphate specific) (251 aa).

The active site involves aspartate 21. Aspartate 21 contributes to the Mg(2+) binding site. Residues 22-25 (GNNR), tryptophan 26, histidine 38, and 66-68 (SSE) contribute to the substrate site. Asparagine 69 serves as the catalytic Proton acceptor. Substrate contacts are provided by residues tryptophan 70, arginine 72, arginine 189, and 195-197 (RIS). Glutamate 208 provides a ligand contact to Mg(2+).

Belongs to the UPP synthase family. Homodimer. The cofactor is Mg(2+).

The enzyme catalyses 8 isopentenyl diphosphate + (2E,6E)-farnesyl diphosphate = di-trans,octa-cis-undecaprenyl diphosphate + 8 diphosphate. Its function is as follows. Catalyzes the sequential condensation of isopentenyl diphosphate (IPP) with (2E,6E)-farnesyl diphosphate (E,E-FPP) to yield (2Z,6Z,10Z,14Z,18Z,22Z,26Z,30Z,34E,38E)-undecaprenyl diphosphate (di-trans,octa-cis-UPP). UPP is the precursor of glycosyl carrier lipid in the biosynthesis of bacterial cell wall polysaccharide components such as peptidoglycan and lipopolysaccharide. In Pseudomonas putida (strain ATCC 47054 / DSM 6125 / CFBP 8728 / NCIMB 11950 / KT2440), this protein is Ditrans,polycis-undecaprenyl-diphosphate synthase ((2E,6E)-farnesyl-diphosphate specific).